The following is a 660-amino-acid chain: Probable beta-hexosaminidase fdl (660 aa).

A signal peptide spans 1-36 (MSLAVSLRRALLVLLTGAIFILTVLYWNQGVTKAQA). N-linked (GlcNAc...) asparagine glycosylation is found at asparagine 210, asparagine 412, and asparagine 452.

Belongs to the glycosyl hydrolase 20 family. In third instar larval and early pupal brains, expressed in cells sending projections across the interhemispheric junction. In adult brain, expressed in mushroom body, ellipsoid body and pars intercerebralis.

The enzyme catalyses Hydrolysis of terminal non-reducing N-acetyl-D-hexosamine residues in N-acetyl-beta-D-hexosaminides.. Functionally, involved in brain restructurization via hormonal control during metamorphosis. Implicated in N-glycan processing. The polypeptide is Probable beta-hexosaminidase fdl (fdl) (Drosophila melanogaster (Fruit fly)).